The sequence spans 543 residues: Glucose-6-phosphate isomerase (543 aa).

Catalysis depends on glutamate 353, which acts as the Proton donor. Residues histidine 384 and lysine 512 contribute to the active site.

This sequence belongs to the GPI family.

The protein resides in the cytoplasm. It carries out the reaction alpha-D-glucose 6-phosphate = beta-D-fructose 6-phosphate. It participates in carbohydrate biosynthesis; gluconeogenesis. Its pathway is carbohydrate degradation; glycolysis; D-glyceraldehyde 3-phosphate and glycerone phosphate from D-glucose: step 2/4. Catalyzes the reversible isomerization of glucose-6-phosphate to fructose-6-phosphate. This is Glucose-6-phosphate isomerase from Christiangramia forsetii (strain DSM 17595 / CGMCC 1.15422 / KT0803) (Gramella forsetii).